Consider the following 346-residue polypeptide: Bifunctional phosphatase IMPL2, chloroplastic (346 aa).

Residues 1–61 (MLAQSHFFSK…VSRRRFCLTM (61 aa)) constitute a chloroplast transit peptide. Mg(2+) is bound by residues Glu147, Asp165, and Asp168. Glu147 contacts substrate. Substrate contacts are provided by residues 167–170 (IDGT), 263–265 (GCD), Glu282, and Asp289. Asp289 lines the Mg(2+) pocket.

It belongs to the inositol monophosphatase superfamily. Mg(2+) is required as a cofactor. Ubiquitous. High expression in roots. Expressed in pistil and seed endosperm.

Its subcellular location is the plastid. It is found in the chloroplast. The enzyme catalyses a myo-inositol phosphate + H2O = myo-inositol + phosphate. The catalysed reaction is L-histidinol phosphate + H2O = L-histidinol + phosphate. It carries out the reaction beta-L-galactose 1-phosphate + H2O = L-galactose + phosphate. The protein operates within amino-acid biosynthesis; L-histidine biosynthesis; L-histidine from 5-phospho-alpha-D-ribose 1-diphosphate: step 8/9. It functions in the pathway polyol metabolism; myo-inositol biosynthesis; myo-inositol from D-glucose 6-phosphate: step 2/2. Phosphatase required for histidine production. Also acts on L-galactose 1-phosphate (L-Gal 1-P), D-myoinositol 3-phosphate (D-Ins 3-P) and D-myoinositol 1-phosphate (D-Ins 1-P). The polypeptide is Bifunctional phosphatase IMPL2, chloroplastic (HISN7) (Arabidopsis thaliana (Mouse-ear cress)).